The sequence spans 246 residues: Transcriptional regulatory protein LytR (246 aa).

Residues 2 to 116 (KALIIDDEPL…RIEQAVNKVR (115 aa)) enclose the Response regulatory domain. Asp53 is subject to 4-aspartylphosphate. The HTH LytTR-type domain occupies 141–245 (LPVEIDDKIH…MKDFKASIGL (105 aa)).

In terms of assembly, homodimer; when phosphorylated. Post-translationally, phosphorylated and dephosphorylated by LytS.

The protein resides in the cytoplasm. Member of the two-component regulatory system LytR/LytS that regulates genes involved in autolysis, programmed cell death, biofilm formation and cell wall metabolism. Also participates in sensing and responding to host defense cationic antimicrobial peptides (HDPs). Upon phosphorylation by LytS, functions as a transcription regulator by direct binding to promoter regions of target genes including lrgA and lrgB, to positively regulate their expression. This chain is Transcriptional regulatory protein LytR (lytR), found in Staphylococcus aureus (strain MW2).